The following is a 481-amino-acid chain: Thiol protease (481 aa).

The Calpain catalytic domain occupies 169–481; the sequence is DLREQALSST…ENFWYIAYMY (313 aa). Catalysis depends on residues cysteine 229, histidine 406, and asparagine 426.

The protein belongs to the peptidase C2 family.

Inactive below 20 degrees Celsius and pH 6.0. Inhibited by divalent cations. Thiol protease. Probably an important virulence factor. This Porphyromonas gingivalis (strain ATCC BAA-308 / W83) protein is Thiol protease (tpr).